The chain runs to 129 residues: MAKAPVRARKRVRKQVSDGVAHIHASFNNTIVTITDRQGNALGWATAGGSGFRGSRKSTPFAAQVAAERCAEAVKEYGIKNLEVMVKGPGPGRESTVRALNAAGFRITNITDVTPIPHNGCRPPKKRRV.

It belongs to the universal ribosomal protein uS11 family. As to quaternary structure, part of the 30S ribosomal subunit. Interacts with proteins S7 and S18. Binds to IF-3.

In terms of biological role, located on the platform of the 30S subunit, it bridges several disparate RNA helices of the 16S rRNA. Forms part of the Shine-Dalgarno cleft in the 70S ribosome. The polypeptide is Small ribosomal subunit protein uS11 (Enterobacter sp. (strain 638)).